The primary structure comprises 416 residues: Lipoyl synthase, mitochondrial (416 aa).

The N-terminal 33 residues, 1-33 (MAAASTNRLRLLYTSTRASLPQSTPSILTTRTY), are a transit peptide targeting the mitochondrion. The tract at residues 20 to 52 (LPQSTPSILTTRTYATTDSSTSATSTPKPRRRT) is disordered. The span at 29-46 (TTRTYATTDSSTSATSTP) shows a compositional bias: low complexity. [4Fe-4S] cluster is bound by residues C133, C138, C144, C164, C168, C171, and S379. Positions 147 to 368 (GGDKAAATAT…QRRAEELGFL (222 aa)) constitute a Radical SAM core domain.

The protein belongs to the radical SAM superfamily. Lipoyl synthase family. The cofactor is [4Fe-4S] cluster.

The protein resides in the mitochondrion. The catalysed reaction is [[Fe-S] cluster scaffold protein carrying a second [4Fe-4S](2+) cluster] + N(6)-octanoyl-L-lysyl-[protein] + 2 oxidized [2Fe-2S]-[ferredoxin] + 2 S-adenosyl-L-methionine + 4 H(+) = [[Fe-S] cluster scaffold protein] + N(6)-[(R)-dihydrolipoyl]-L-lysyl-[protein] + 4 Fe(3+) + 2 hydrogen sulfide + 2 5'-deoxyadenosine + 2 L-methionine + 2 reduced [2Fe-2S]-[ferredoxin]. The protein operates within protein modification; protein lipoylation via endogenous pathway; protein N(6)-(lipoyl)lysine from octanoyl-[acyl-carrier-protein]: step 2/2. Functionally, catalyzes the radical-mediated insertion of two sulfur atoms into the C-6 and C-8 positions of the octanoyl moiety bound to the lipoyl domains of lipoate-dependent enzymes, thereby converting the octanoylated domains into lipoylated derivatives. The chain is Lipoyl synthase, mitochondrial from Aspergillus niger (strain ATCC MYA-4892 / CBS 513.88 / FGSC A1513).